The sequence spans 320 residues: ATP-dependent 6-phosphofructokinase (320 aa).

Gly12 is a binding site for ATP. Residues 22 to 26 and 55 to 60 each bind ADP; these read RGVVR and RYSVSD. ATP is bound by residues 73–74 and 103–106; these read RF and GDGS. A Mg(2+)-binding site is contributed by Asp104. Residue 126–128 coordinates substrate; sequence TID. Asp128 acts as the Proton acceptor in catalysis. Residue Arg155 participates in ADP binding. Residues Arg163 and 170-172 each bind substrate; that span reads MGR. Residues 186–188, Lys212, and 214–216 contribute to the ADP site; these read GCE and KKH. Residues Glu223, Arg244, and 250 to 253 each bind substrate; that span reads HIQR.

The protein belongs to the phosphofructokinase type A (PFKA) family. ATP-dependent PFK group I subfamily. Prokaryotic clade 'B1' sub-subfamily. In terms of assembly, homotetramer. Mg(2+) serves as cofactor.

The protein localises to the cytoplasm. The catalysed reaction is beta-D-fructose 6-phosphate + ATP = beta-D-fructose 1,6-bisphosphate + ADP + H(+). It functions in the pathway carbohydrate degradation; glycolysis; D-glyceraldehyde 3-phosphate and glycerone phosphate from D-glucose: step 3/4. Its activity is regulated as follows. Allosterically activated by ADP and other diphosphonucleosides, and allosterically inhibited by phosphoenolpyruvate. In terms of biological role, catalyzes the phosphorylation of D-fructose 6-phosphate to fructose 1,6-bisphosphate by ATP, the first committing step of glycolysis. This chain is ATP-dependent 6-phosphofructokinase, found in Salmonella agona (strain SL483).